A 669-amino-acid chain; its full sequence is Probable serine/threonine-protein kinase DDB_G0291918 (669 aa).

The Protein kinase domain maps to 13–360 (YNNIKELGRG…LKETLNHPFL (348 aa)). ATP-binding positions include 19–27 (LGRGVSGVV) and K42. Catalysis depends on D141, which acts as the Proton acceptor. Low complexity predominate over residues 396 to 405 (QNQQQQQQQQ). Disordered regions lie at residues 396-518 (QNQQ…APTF) and 530-550 (FPKL…MNWR). Residues 406-418 (KSFSTSSLPQVNH) show a composition bias toward polar residues. Composition is skewed to low complexity over residues 419–449 (NNDT…NNNN) and 457–494 (QSNN…SSTD).

Belongs to the protein kinase superfamily. Ser/Thr protein kinase family.

The catalysed reaction is L-seryl-[protein] + ATP = O-phospho-L-seryl-[protein] + ADP + H(+). The enzyme catalyses L-threonyl-[protein] + ATP = O-phospho-L-threonyl-[protein] + ADP + H(+). The polypeptide is Probable serine/threonine-protein kinase DDB_G0291918 (Dictyostelium discoideum (Social amoeba)).